The sequence spans 140 residues: ATP synthase epsilon chain (140 aa).

Belongs to the ATPase epsilon chain family. F-type ATPases have 2 components, CF(1) - the catalytic core - and CF(0) - the membrane proton channel. CF(1) has five subunits: alpha(3), beta(3), gamma(1), delta(1), epsilon(1). CF(0) has three main subunits: a, b and c.

Its subcellular location is the cell inner membrane. Its function is as follows. Produces ATP from ADP in the presence of a proton gradient across the membrane. This chain is ATP synthase epsilon chain, found in Saccharophagus degradans (strain 2-40 / ATCC 43961 / DSM 17024).